A 573-amino-acid polypeptide reads, in one-letter code: Dilute domain-containing protein SPAC25B8.08 (573 aa).

In terms of domain architecture, Dilute spans 180-464 (NAFLCEVNQV…LKKLDAFHEE (285 aa)).

It is found in the cytoplasm. It localises to the golgi apparatus. The protein is Dilute domain-containing protein SPAC25B8.08 of Schizosaccharomyces pombe (strain 972 / ATCC 24843) (Fission yeast).